A 439-amino-acid chain; its full sequence is Ribosomal protein uS12 methylthiotransferase RimO (439 aa).

Residues 5 to 115 enclose the MTTase N-terminal domain; it reads PKIGFVSLGC…LIEAVHTHAP (111 aa). Positions 14, 50, 79, 146, 150, and 153 each coordinate [4Fe-4S] cluster. The Radical SAM core domain maps to 132–369; it reads LTPRHYSYLK…MGLQAQISTD (238 aa). A TRAM domain is found at 372 to 439; that stretch reads QRFVGTEQQV…ESTEYDLIAD (68 aa).

The protein belongs to the methylthiotransferase family. RimO subfamily. Requires [4Fe-4S] cluster as cofactor.

It is found in the cytoplasm. It carries out the reaction L-aspartate(89)-[ribosomal protein uS12]-hydrogen + (sulfur carrier)-SH + AH2 + 2 S-adenosyl-L-methionine = 3-methylsulfanyl-L-aspartate(89)-[ribosomal protein uS12]-hydrogen + (sulfur carrier)-H + 5'-deoxyadenosine + L-methionine + A + S-adenosyl-L-homocysteine + 2 H(+). Catalyzes the methylthiolation of an aspartic acid residue of ribosomal protein uS12. This is Ribosomal protein uS12 methylthiotransferase RimO from Francisella tularensis subsp. novicida (strain U112).